The primary structure comprises 366 residues: Spermidine/putrescine import ATP-binding protein PotA (366 aa).

Positions 8–239 constitute an ABC transporter domain; sequence IRFENVTKQF…PINKFVADFI (232 aa). Position 41-48 (41-48) interacts with ATP; sequence GPSGCGKT.

The protein belongs to the ABC transporter superfamily. Spermidine/putrescine importer (TC 3.A.1.11.1) family. As to quaternary structure, the complex is composed of two ATP-binding proteins (PotA), two transmembrane proteins (PotB and PotC) and a solute-binding protein (PotD).

Its subcellular location is the cell membrane. The enzyme catalyses ATP + H2O + polyamine-[polyamine-binding protein]Side 1 = ADP + phosphate + polyamineSide 2 + [polyamine-binding protein]Side 1.. In terms of biological role, part of the ABC transporter complex PotABCD involved in spermidine/putrescine import. Responsible for energy coupling to the transport system. The protein is Spermidine/putrescine import ATP-binding protein PotA of Listeria innocua serovar 6a (strain ATCC BAA-680 / CLIP 11262).